The chain runs to 127 residues: Large ribosomal subunit protein uL24B (127 aa).

The protein belongs to the universal ribosomal protein uL24 family. As to quaternary structure, component of the large ribosomal subunit (LSU). Mature yeast ribosomes consist of a small (40S) and a large (60S) subunit. The 40S small subunit contains 1 molecule of ribosomal RNA (18S rRNA) and 33 different proteins (encoded by 57 genes). The large 60S subunit contains 3 rRNA molecules (25S, 5.8S and 5S rRNA) and 46 different proteins (encoded by 81 genes).

The protein resides in the cytoplasm. Component of the ribosome, a large ribonucleoprotein complex responsible for the synthesis of proteins in the cell. The small ribosomal subunit (SSU) binds messenger RNAs (mRNAs) and translates the encoded message by selecting cognate aminoacyl-transfer RNA (tRNA) molecules. The large subunit (LSU) contains the ribosomal catalytic site termed the peptidyl transferase center (PTC), which catalyzes the formation of peptide bonds, thereby polymerizing the amino acids delivered by tRNAs into a polypeptide chain. The nascent polypeptides leave the ribosome through a tunnel in the LSU and interact with protein factors that function in enzymatic processing, targeting, and the membrane insertion of nascent chains at the exit of the ribosomal tunnel. The chain is Large ribosomal subunit protein uL24B from Saccharomyces cerevisiae (strain ATCC 204508 / S288c) (Baker's yeast).